Reading from the N-terminus, the 108-residue chain is Small ribosomal subunit protein uS10 (108 aa).

This sequence belongs to the universal ribosomal protein uS10 family. As to quaternary structure, part of the 30S ribosomal subunit.

Its function is as follows. Involved in the binding of tRNA to the ribosomes. This chain is Small ribosomal subunit protein uS10, found in Rhodopirellula baltica (strain DSM 10527 / NCIMB 13988 / SH1).